Reading from the N-terminus, the 701-residue chain is Glycine--tRNA ligase beta subunit (701 aa).

It belongs to the class-II aminoacyl-tRNA synthetase family. As to quaternary structure, tetramer of two alpha and two beta subunits.

Its subcellular location is the cytoplasm. It catalyses the reaction tRNA(Gly) + glycine + ATP = glycyl-tRNA(Gly) + AMP + diphosphate. The protein is Glycine--tRNA ligase beta subunit of Thiobacillus denitrificans (strain ATCC 25259 / T1).